The following is a 441-amino-acid chain: Transcriptional regulatory protein ZraR (441 aa).

The Response regulatory domain occupies 7-121 (DILVVDDDVS…RLQETLEKAL (115 aa)). The residue at position 56 (D56) is a 4-aspartylphosphate. The Sigma-54 factor interaction domain maps to 141-370 (MIGSSPAMQH…LENAIERAVV (230 aa)). 4 residues coordinate ATP: G172, T173, R329, and R359. Positions 421–440 (KTEAARQLGITRKTLLAKLS) form a DNA-binding region, H-T-H motif.

As to quaternary structure, forms homohexamers in the crystal structure. However, the dimerization interface between DNA-binding domains observed in the crystal structure suggests that dodecamers, rather than hexamers, might be the functionally important oligomer. In terms of processing, phosphorylated by ZraS.

It localises to the cytoplasm. Its activity is regulated as follows. Activity of the ZraS/ZraR two-component system is repressed by the zinc-bound form of ZraP, which probably interacts with the periplasmic region of ZraS. In terms of biological role, part of the Zra signaling pathway, an envelope stress response (ESR) system composed of the periplasmic accessory protein ZraP, the histidine kinase ZraS and the transcriptional regulator ZraR. The ZraPSR system contributes to antibiotic resistance and is important for membrane integrity in the presence of membrane-targeting biocides. ZraR is a member of the two-component regulatory system ZraS/ZraR. When activated by ZraS, acts in conjunction with sigma-54 to regulate the expression of zraP in the presence of high Zn(2+) or Pb(2+) concentrations. Also positively autoregulates the expression of the zraSR operon. This chain is Transcriptional regulatory protein ZraR, found in Salmonella typhimurium (strain LT2 / SGSC1412 / ATCC 700720).